We begin with the raw amino-acid sequence, 195 residues long: MSKAMIGKPAPEFTATAVVDGDFKSISLSDYKGKYVVLFFYPMDFTFVCPTEIIAFSEHVGEFKKLGVEVLAASTDSQFSHLAWINTPRKQGGLGEMKIPIISDNNHQISRDYGVLKEDDGIAYRGLFIIDPKGILRQITVNDLPVGRSVTETLRLVQAFQFVDKHGEVCPAGWTPGADTIKPGVKESKAYFEKH.

The Thioredoxin domain occupies 4–162 (AMIGKPAPEF…TLRLVQAFQF (159 aa)). The active-site Cysteine sulfenic acid (-SOH) intermediate is the Cys49.

This sequence belongs to the peroxiredoxin family. AhpC/Prx1 subfamily. As to quaternary structure, homodimer; disulfide-linked, upon oxidation.

It catalyses the reaction a hydroperoxide + [thioredoxin]-dithiol = an alcohol + [thioredoxin]-disulfide + H2O. Thiol-specific peroxidase that catalyzes the reduction of hydrogen peroxide and organic hydroperoxides to water and alcohols, respectively. Plays a role in cell protection against oxidative stress by detoxifying peroxides and as sensor of hydrogen peroxide-mediated signaling events. In Ascaris suum (Pig roundworm), this protein is Peroxiredoxin.